The sequence spans 344 residues: MIRTVKPKNARAKRALVKREAKLVENVKQALFIPGQSCNKNLHDIMVDLSALKKPDMKRFNRKNDIHPFEDMSPLEFFSEKNDCSLMVLMTSSKKRKNNMTFIRTFGYKIYDMIELMVADNFKLLSDFKKLTFTVGLKPMFTFQGAAFDTHPVYKQIKSLFLDFFRGESTDLQDVAGLQHVISMTIQGDFQDGEPLPNVLFRVYKLKSYKSDQGGKRLPRIELVEIGPRLDFKIGRIHTPSPDMVTEAHKKPKQLEMKTKKNVELDIMGDKLGRIHMGKQDLGKLQTRKMKGLKSKFDQGTEEGDGEVDEDYEDEASYSDDGQEYEEEFVSATDIEPSAKRQKK.

In terms of domain architecture, Brix spans 28–243 (KQALFIPGQS…IGRIHTPSPD (216 aa)). Ser73 carries the post-translational modification Phosphoserine. Residues 291-344 (KGLKSKFDQGTEEGDGEVDEDYEDEASYSDDGQEYEEEFVSATDIEPSAKRQKK) are disordered. Over residues 300–329 (GTEEGDGEVDEDYEDEASYSDDGQEYEEEF) the composition is skewed to acidic residues.

Belongs to the RPF2 family. As to quaternary structure, part of a complex that includes BRX1, RPF1, RPF2 and SSF1 or SSF2. Component of a hexameric 5S RNP precursor complex, composed of 5S RNA, RRS1, RPF2, RPL5, RPL11A/RPL11B and SYO1; this complex acts as a precursor for ribosome assembly.

The protein localises to the nucleus. The protein resides in the nucleolus. Its function is as follows. Required for biogenesis of the 60S ribosomal subunit. The protein is Ribosome biogenesis protein RPF2 (RPF2) of Saccharomyces cerevisiae (strain ATCC 204508 / S288c) (Baker's yeast).